Reading from the N-terminus, the 437-residue chain is Transcription factor AP-2-alpha (437 aa).

A Glycyl lysine isopeptide (Lys-Gly) (interchain with G-Cter in SUMO); alternate cross-link involves residue lysine 10. Residue lysine 10 forms a Glycyl lysine isopeptide (Lys-Gly) (interchain with G-Cter in SUMO2); alternate linkage. Residues 14–107 form a disordered region; sequence CEDRHDGASN…GQRQSQESGL (94 aa). The short motif at 57–62 is the PPxY motif element; that stretch reads YFPPPY. Composition is skewed to low complexity over residues 65-74 and 88-101; these read IYPQSQDPYS and QPQPQHPGWPGQRQ. Residues lysine 177 and lysine 184 each participate in a glycyl lysine isopeptide (Lys-Gly) (interchain with G-Cter in SUMO2) cross-link. Residue serine 239 is modified to Phosphoserine; by PKA. The H-S-H (helix-span-helix), dimerization stretch occupies residues 280–410; sequence RRKAANVTLL…YLTEALKAMD (131 aa). Over residues 414 to 427 the composition is skewed to polar residues; it reads LSNNPNSHTDNNAK. Residues 414–437 are disordered; it reads LSNNPNSHTDNNAKSSDKEEKHRK. The segment covering 428–437 has biased composition (basic and acidic residues); the sequence is SSDKEEKHRK.

Belongs to the AP-2 family. In terms of assembly, binds DNA as a dimer. Can form homodimers or heterodimers with other AP-2 family members. Interacts with WWOX. Interacts with CITED4. Interacts with UBE2I. Interacts with RALBP1 in a complex also containing EPN1 and NUMB during interphase and mitosis. Interacts with KCTD1; this interaction represses transcription activation. Interacts (via C-terminus) with CITED2 (via C-terminus); the interaction stimulates TFAP2A-transcriptional activation. Interacts (via N-terminus) with EP300 (via N-terminus); the interaction requires CITED2. Interacts with KCTD15; this interaction inhibits TFAP2A transcriptional activation. Post-translationally, sumoylated on Lys-10; which inhibits transcriptional activity.

Its subcellular location is the nucleus. In terms of biological role, sequence-specific DNA-binding protein that interacts with inducible viral and cellular enhancer elements to regulate transcription of selected genes. AP-2 factors bind to the consensus sequence 5'-GCCNNNGGC-3' and activate genes involved in a large spectrum of important biological functions including proper eye, face, body wall, limb and neural tube development. They also suppress a number of genes including MCAM/MUC18, C/EBP alpha and MYC. AP-2-alpha is the only AP-2 protein required for early morphogenesis of the lens vesicle. Together with the CITED2 coactivator, stimulates the PITX2 P1 promoter transcription activation. Associates with chromatin to the PITX2 P1 promoter region. This chain is Transcription factor AP-2-alpha (TFAP2A), found in Bos taurus (Bovine).